Reading from the N-terminus, the 552-residue chain is Leiomodin-2 (552 aa).

The interval 1 to 47 is interaction with tropomyosin alpha; the sequence is MSTFGYRRELSKYEDIDEDELLASLTEEELKELERELEDIEPDRNLP. 2 interaction with actin regions span residues 1–169 and 170–498; these read MSTF…SSHV and RHKK…KEIK. Residues 13 to 46 adopt a coiled-coil conformation; the sequence is YEDIDEDELLASLTEEELKELERELEDIEPDRNL. Disordered regions lie at residues 33–67, 87–191, and 364–531; these read LERE…FSRE, GACE…DGKD, and MDKQ…DNLM. Over residues 51 to 64 the composition is skewed to polar residues; that stretch reads RQKSLTEKTPTGTF. Residues 86–151 are a coiled coil; the sequence is LGACEKDSEQ…DDEDEEKQNS (66 aa). Composition is skewed to acidic residues over residues 93-108 and 115-147; these read SEQE…EECF and VSEE…EDEE. A compositionally biased stretch (basic and acidic residues) spans 364-377; that stretch reads MDKQRQKRMQEQRQ. The segment covering 398–415 has biased composition (low complexity); the sequence is PRSSPYTSPKSSPWSSPK. Over residues 425 to 450 the composition is skewed to pro residues; sequence SQPPAPAPPPPPPPPPPPPPPPPPVI. Over residues 478–488 the composition is skewed to basic residues; the sequence is QKKKKGKKGKK. Over residues 489 to 513 the composition is skewed to basic and acidic residues; it reads HENSILKEIKDSLKSVSDRKSEEGS. Residues 514 to 524 show a composition bias toward polar residues; sequence RPSTRPSTPQR. Positions 526-545 are interaction with actin 3; the sequence is LHDNLMEAIRASSIKQLRRV. A WH2 domain is found at 526–545; that stretch reads LHDNLMEAIRASSIKQLRRV.

The protein belongs to the tropomodulin family. As to quaternary structure, can bind at least three actin monomers and thereby provides a nucleus for actin filament formation. Interacts (via N-terminus) with tropomyosin alpha (TPM1) (via N-terminus). May also interact with TPM2 (via N-terminus).

It localises to the cytoplasm. It is found in the myofibril. Its subcellular location is the sarcomere. The protein localises to the m line. The protein resides in the cytoskeleton. Mediates nucleation of actin filaments and thereby promotes actin polymerization. Plays a role in the regulation of actin filament length. Required for normal sarcomere organization in the heart, and for normal heart function. The protein is Leiomodin-2 (LMOD2) of Gallus gallus (Chicken).